A 70-amino-acid polypeptide reads, in one-letter code: DNA-directed RNA polymerase subunit epsilon (70 aa).

Belongs to the RNA polymerase subunit epsilon family. As to quaternary structure, RNAP is composed of a core of 2 alpha, a beta and a beta' subunit. The core is associated with a delta subunit, and at least one of epsilon or omega. When a sigma factor is associated with the core the holoenzyme is formed, which can initiate transcription.

The catalysed reaction is RNA(n) + a ribonucleoside 5'-triphosphate = RNA(n+1) + diphosphate. Its function is as follows. A non-essential component of RNA polymerase (RNAP). The chain is DNA-directed RNA polymerase subunit epsilon from Leuconostoc mesenteroides subsp. mesenteroides (strain ATCC 8293 / DSM 20343 / BCRC 11652 / CCM 1803 / JCM 6124 / NCDO 523 / NBRC 100496 / NCIMB 8023 / NCTC 12954 / NRRL B-1118 / 37Y).